A 187-amino-acid chain; its full sequence is Dihydrofolate reductase (187 aa).

Residues P4 to K185 form the DHFR domain. Residues A10 and G16–D22 contribute to the NADP(+) site. E31–Q36 lines the substrate pocket. R55 to T57 serves as a coordination point for NADP(+). A substrate-binding site is contributed by R71. Residues S77 to E79 and G117 to E124 each bind NADP(+).

The protein belongs to the dihydrofolate reductase family. In terms of assembly, homodimer.

The protein resides in the mitochondrion. The protein localises to the cytoplasm. It carries out the reaction (6S)-5,6,7,8-tetrahydrofolate + NADP(+) = 7,8-dihydrofolate + NADPH + H(+). Its pathway is cofactor biosynthesis; tetrahydrofolate biosynthesis; 5,6,7,8-tetrahydrofolate from 7,8-dihydrofolate: step 1/1. Its function is as follows. Key enzyme in folate metabolism. Contributes to the de novo mitochondrial thymidylate biosynthesis pathway. Catalyzes an essential reaction for de novo glycine and purine synthesis, and for DNA precursor synthesis. Binds its own mRNA and that of DHFR2. This chain is Dihydrofolate reductase (DHFR), found in Bos taurus (Bovine).